A 240-amino-acid polypeptide reads, in one-letter code: MLSLVMKILRKPKIEDIVCNIQNNEEDKEAFIVQYQPFIRKSISSVCRRYITEQDDEYSIGLFAFNEAIEQYSYKKGKSFLAFADLLIKRDVIDYIRKESKHNLVFLKEDEQEEMLEMQVSLTEYMKEIENGNRKEEILHFQSVLADFKITFSELAKESPKHRDTREHLIEIVKVIIKEEEMMEELFRKKKLPLKHIEPRVRVSRKTLERHRKYIIAMCIIFANNYTYILDYIRGGKHDE.

A Polymerase core binding motif is present at residues 56–69; sequence DEYSIGLFAFNEAI. Residues 194–213 constitute a DNA-binding region (H-T-H motif); the sequence is LKHIEPRVRVSRKTLERHRK.

It belongs to the sigma-70 factor family. SigI subfamily. As to quaternary structure, interacts with RsgI.

It is found in the cytoplasm. With respect to regulation, negatively regulated by the anti-sigma-I factor RsgI. Sigma factors are initiation factors that promote the attachment of RNA polymerase to specific initiation sites and are then released. This sigma factor contributes to both stress response and virulence gene expression. This Bacillus anthracis protein is RNA polymerase sigma factor SigI.